The sequence spans 414 residues: MNVTVRFLRPFARCLVPYTFHRKRSHLYSGVLQRYMSSKAPSLSCHNKDSASPPEQLELDGWKATMKSSIQEDGVSEVSDKDEDSLASTRELIEMWRLLGKEVPEHITEEDLKTLMECASKSAKKKYLRYLYGKEKAKKAKQVKKEMKAEAREEAKRARLLETTAEEQQQDFMFLRLWDRQINIALGWKGVQAMQFGQPLVFDMAYDNYMKPSELQNTVSQLLESEGWNRRNVDPFHIYFCNLKIDSAYHRELVKRYREKWDKLLLTATEKSPVDLFPKDSIIYLTADSPNVMTTFKHDKIYIIGSFVDKNTQTGTSLAKAKRLNIATECLPLDKYLQWEIGNKNLTLDQMIRILLCLKNTGNWEEALKFVPRRKHTGYLEVSEQSQELVRKLKKTKTLNSFRKGSLNVRTWKR.

The transit peptide at 1-35 directs the protein to the mitochondrion; it reads MNVTVRFLRPFARCLVPYTFHRKRSHLYSGVLQRY. Ser79 is modified (phosphoserine). Residues 133 to 171 are a coiled coil; it reads GKEKAKKAKQVKKEMKAEAREEAKRARLLETTAEEQQQD. The 193-residue stretch at 186–378 folds into the SAM-dependent MTase TRM10-type domain; that stretch reads LGWKGVQAMQ…KFVPRRKHTG (193 aa).

Belongs to the class IV-like SAM-binding methyltransferase superfamily. TRM10 family. As to quaternary structure, component of mitochondrial ribonuclease P, a complex composed of TRMT10C/MRPP1, HSD17B10/MRPP2 and PRORP/MRPP3. Interacts with HSD17B10/MRPP2; forming the MRPP1-MRPP2 subcomplex of the mitochondrial ribonuclease P complex. Interacts with GRSF1.

It is found in the mitochondrion matrix. It localises to the mitochondrion nucleoid. It carries out the reaction adenosine(9) in tRNA + S-adenosyl-L-methionine = N(1)-methyladenosine(9) in tRNA + S-adenosyl-L-homocysteine + H(+). The catalysed reaction is guanosine(9) in tRNA + S-adenosyl-L-methionine = N(1)-methylguanosine(9) in tRNA + S-adenosyl-L-homocysteine + H(+). The enzyme catalyses an adenosine in mRNA + S-adenosyl-L-methionine = an N(1)-methyladenosine in mRNA + S-adenosyl-L-homocysteine + H(+). In terms of biological role, mitochondrial tRNA N(1)-methyltransferase involved in mitochondrial tRNA maturation. Component of mitochondrial ribonuclease P, a complex composed of TRMT10C/MRPP1, HSD17B10/MRPP2 and PRORP/MRPP3, which cleaves tRNA molecules in their 5'-ends. Together with HSD17B10/MRPP2, forms a subcomplex of the mitochondrial ribonuclease P, named MRPP1-MRPP2 subcomplex, which displays functions that are independent of the ribonuclease P activity. The MRPP1-MRPP2 subcomplex catalyzes the formation of N(1)-methylguanine and N(1)-methyladenine at position 9 (m1G9 and m1A9, respectively) in tRNAs; TRMT10C/MRPP1 acting as the catalytic N(1)-methyltransferase subunit. The MRPP1-MRPP2 subcomplex also acts as a tRNA maturation platform: following 5'-end cleavage by the mitochondrial ribonuclease P complex, the MRPP1-MRPP2 subcomplex enhances the efficiency of 3'-processing catalyzed by ELAC2, retains the tRNA product after ELAC2 processing and presents the nascent tRNA to the mitochondrial CCA tRNA nucleotidyltransferase TRNT1 enzyme. In addition to tRNA N(1)-methyltransferase activity, TRMT10C/MRPP1 also acts as a mRNA N(1)-methyltransferase by mediating methylation of adenosine residues at the N(1) position of MT-ND5 mRNA. Associates with mitochondrial DNA complexes at the nucleoids to initiate RNA processing and ribosome assembly. This Mus musculus (Mouse) protein is tRNA methyltransferase 10 homolog C.